Consider the following 157-residue polypeptide: Urease accessory protein UreE (157 aa).

Belongs to the UreE family.

Its subcellular location is the cytoplasm. In terms of biological role, involved in urease metallocenter assembly. Binds nickel. Probably functions as a nickel donor during metallocenter assembly. This Paenarthrobacter aurescens (strain TC1) protein is Urease accessory protein UreE.